The primary structure comprises 1074 residues: Insulin receptor substrate 2-A (1074 aa).

The tract at residues 1–64 is disordered; the sequence is MAGVLCPTEE…PPASAAEDDV (64 aa). 2 short sequence motifs (YXXM motif) span residues 33 to 36 and 145 to 148; these read YRRM and YFAM. A PH domain is found at 63–168; the sequence is DVRKRGYLRK…WYQALSELIN (106 aa). The 105-residue stretch at 193-297 folds into the IRS-type PTB domain; sequence FKEVWQVNVK…DTMKALKAYS (105 aa). 3 disordered regions span residues 326 to 370, 426 to 461, and 475 to 510; these read PPSQ…RPFR, CSSSGHGSASETLTRPSSSSVCGSPSDGGFISSDEY, and SNTPDSLGNTPPIQEENTLSDYMSMSTHSQPDSRDD. Over residues 347-361 the composition is skewed to polar residues; that stretch reads SAKNNSFRFRTSSEG. Low complexity-rich tracts occupy residues 426 to 435 and 442 to 454; these read CSSSGHGSAS and SSSSVCGSPSDGG. Residues 475–504 show a composition bias toward polar residues; sequence SNTPDSLGNTPPIQEENTLSDYMSMSTHSQ. 6 consecutive short sequence motifs (YXXM motif) follow at residues 496 to 499, 592 to 595, 605 to 608, 631 to 634, 663 to 666, and 710 to 713; these read YMSM, YMPM, YLPM, YMMM, YMDM, and YVPM. The disordered stretch occupies residues 801-821; that stretch reads TPYSLSADGSPSSLGSSCDHR. Positions 804–817 are enriched in low complexity; it reads SLSADGSPSSLGSS. A YXXM motif 9 motif is present at residues 888-891; it reads YTTM.

Phosphorylated by INSR.

Potentiates insulin signaling. This is Insulin receptor substrate 2-A (irs2-a) from Xenopus laevis (African clawed frog).